The primary structure comprises 795 residues: MKFSEQWVREWVNPAVNTEQLCDQITMLGLEVDGVEAVAGEFNGVVVGEVVECAQHPDADKLRVTKVNVGGERLLDIVCGAPNCRQGLKVACAIEGAVLPGDFKIKKTKLRGQPSEGMLCSYRELGMSEDHSGIIELPADAPVGKDFREYLILDDKEIEISLTPNRADCLSIAGVAREIGVVNQLAVTEPAINPVPVTSDEKVAINVLAPEACPRYLLRSVKNVNVNAETPVWMKEKLRRCGIRSIDPIVDITNFVLLELGQPMHAFDAAKLAQPVQVRFAADGEELVLLDGTTAKLQSNTLVIADQTGPLAMAGIFGGQASGVNAQTKDVILEAAFFAPLAITGRARQYGLHTDSSHRFERGVDFELQHKAMERATSLLVEICGGEVGEICEVVSETHLPKLNKVQLRRSKLDALLGHHIETETVTEIFHRLGLPVSYENEVWTVTSASWRFDIEIEEDLIEEIARIYGYNSIPNNAPLAHLSMREHHESDLELSRIKLALVGNDFHEAITYSFVDPKLQSILHPEQAVWILPNPISSEMSAMRVSLLTGLLGAVVYNQNRQQNRVRLFETGLRFIPDESAEFGIRQELVFAAVMTGSRLSEHWASKAEPADFFDLKGYIENLLSLTKAGPYIKFVAKEFPAFHPGQSAAIVLDGEEIGYIGQLHPMAAQKLGINGKAFACELIVDKVAERNVANAKEISKFPANKRDLALVVAENIAASDILDACREVAGSKLTQVNLFDVYQGQGVPEGHKSLAISLTIQDTEKTLEEDDINAVISVVLSELKDRFNAYLRD.

The 110-residue stretch at 39 to 148 folds into the tRNA-binding domain; sequence AGEFNGVVVG…ADAPVGKDFR (110 aa). Positions 401-476 constitute a B5 domain; that stretch reads PKLNKVQLRR…RIYGYNSIPN (76 aa). Residues Asp-454, Asp-460, Glu-463, and Glu-464 each coordinate Mg(2+). The FDX-ACB domain maps to 701–794; sequence SKFPANKRDL…LKDRFNAYLR (94 aa).

It belongs to the phenylalanyl-tRNA synthetase beta subunit family. Type 1 subfamily. As to quaternary structure, tetramer of two alpha and two beta subunits. The cofactor is Mg(2+).

Its subcellular location is the cytoplasm. It catalyses the reaction tRNA(Phe) + L-phenylalanine + ATP = L-phenylalanyl-tRNA(Phe) + AMP + diphosphate + H(+). This chain is Phenylalanine--tRNA ligase beta subunit, found in Mannheimia succiniciproducens (strain KCTC 0769BP / MBEL55E).